The chain runs to 317 residues: Cytochrome f (317 aa).

Residues M1–A31 form the signal peptide. Heme-binding residues include Y32, C52, C55, and H56. A helical membrane pass occupies residues P280–V302.

The protein belongs to the cytochrome f family. In terms of assembly, the 4 large subunits of the cytochrome b6-f complex are cytochrome b6, subunit IV (17 kDa polypeptide, petD), cytochrome f and the Rieske protein, while the 4 small subunits are PetG, PetL, PetM and PetN. The complex functions as a dimer. Requires heme as cofactor.

It is found in the plastid. It localises to the chloroplast thylakoid membrane. Functionally, component of the cytochrome b6-f complex, which mediates electron transfer between photosystem II (PSII) and photosystem I (PSI), cyclic electron flow around PSI, and state transitions. This Chlamydomonas subcaudata protein is Cytochrome f.